The sequence spans 395 residues: Carbohydrate sulfotransferase 6 (395 aa).

Topologically, residues 1-5 are cytoplasmic; that stretch reads MWLPR. Residues 6 to 26 traverse the membrane as a helical; Signal-anchor for type II membrane protein segment; that stretch reads VSSTAVTALLLAQTFLLLFLV. Over 27–395 the chain is Lumenal; sequence SRPGPSSPAG…ASSTASHPRN (369 aa). 49–55 contacts 3'-phosphoadenylyl sulfate; that stretch reads WRSGSSF. A glycan (N-linked (GlcNAc...) asparagine) is linked at Asn116. 202–210 provides a ligand contact to 3'-phosphoadenylyl sulfate; it reads RDPRAVLRS. 3 N-linked (GlcNAc...) asparagine glycosylation sites follow: Asn229, Asn305, and Asn328.

Belongs to the sulfotransferase 1 family. Gal/GlcNAc/GalNAc subfamily. As to expression, expressed in cornea. Mainly expressed in brain. Also expressed in spinal cord and trachea.

It is found in the golgi apparatus membrane. It catalyses the reaction 3'-phosphoadenylyl sulfate + keratan = adenosine 3',5'-bisphosphate + keratan 6'-sulfate.. Sulfotransferase that utilizes 3'-phospho-5'-adenylyl sulfate (PAPS) as sulfonate donor to catalyze the transfer of sulfate to position 6 of non-reducing N-acetylglucosamine (GlcNAc) residues of keratan. Cooperates with B4GALT4 galactosyltransferase and B3GNT7 N-acetylglucosaminyltransferase to construct and elongate the sulfated disaccharide unit [-&gt;3Galbeta1-&gt;4(6-sulfoGlcNAcbeta)1-&gt;] within keratan sulfate polymer. Involved in biosynthesis of keratan sulfate in cornea, with an impact on proteoglycan fibril organization and corneal transparency. Involved in sulfation of endothelial mucins such as GLYCAM1. The polypeptide is Carbohydrate sulfotransferase 6 (Homo sapiens (Human)).